The sequence spans 935 residues: Isoleucine--tRNA ligase (935 aa).

The 'HIGH' region motif lies at 58-68; sequence PYANGNLHLGH. Residue Glu-559 coordinates L-isoleucyl-5'-AMP. The 'KMSKS' region motif lies at 600 to 604; the sequence is KMSKS. Lys-603 contributes to the ATP binding site. Zn(2+)-binding residues include Cys-898, Cys-901, Cys-918, and Cys-921.

Belongs to the class-I aminoacyl-tRNA synthetase family. IleS type 1 subfamily. As to quaternary structure, monomer. Zn(2+) serves as cofactor.

It localises to the cytoplasm. The catalysed reaction is tRNA(Ile) + L-isoleucine + ATP = L-isoleucyl-tRNA(Ile) + AMP + diphosphate. In terms of biological role, catalyzes the attachment of isoleucine to tRNA(Ile). As IleRS can inadvertently accommodate and process structurally similar amino acids such as valine, to avoid such errors it has two additional distinct tRNA(Ile)-dependent editing activities. One activity is designated as 'pretransfer' editing and involves the hydrolysis of activated Val-AMP. The other activity is designated 'posttransfer' editing and involves deacylation of mischarged Val-tRNA(Ile). This Haemophilus ducreyi (strain 35000HP / ATCC 700724) protein is Isoleucine--tRNA ligase.